The sequence spans 508 residues: Probable ligand-gated ion channel 46 (508 aa).

The N-terminal stretch at 1–18 (MQYLQFLSLVVLLLMCHA) is a signal peptide. The Extracellular segment spans residues 19–274 (RKSVYRRNSP…FEFKRRAGWY (256 aa)). Asparagine 65, asparagine 134, asparagine 175, and asparagine 201 each carry an N-linked (GlcNAc...) asparagine glycan. A disulfide bond links cysteine 190 and cysteine 204. The chain crosses the membrane as a helical span at residues 275-295 (ILQAYLPTYLTICISWISFAL). The Cytoplasmic portion of the chain corresponds to 296 to 301 (GSKAIP). The helical transmembrane segment at 302–321 (ARTMLGVNSLLAMTFQFGNI) threads the bilayer. Residues 322–335 (IRNLPRVSYVKAID) lie on the Extracellular side of the membrane. A helical transmembrane segment spans residues 336 to 356 (VWMLSCMTFVFCSLLELAWVG). Topologically, residues 357–480 (YLSREEEPTS…KQRREILAHK (124 aa)) are cytoplasmic. The disordered stretch occupies residues 374 to 407 (AQVAPKPCHPPPVQQNANNSSVHRRQKQPKNEEE). A helical membrane pass occupies residues 481–501 (IDSVSVFMFPFLFVLFNIAYW). Residues 502–508 (QHYLRGY) lie on the Extracellular side of the membrane.

Belongs to the ligand-gated ion channel (TC 1.A.9) family. Expressed in the nervous system, with high expression in cholinergic motor neurons and weak expression in GABAergic motor neurons.

It localises to the presynaptic cell membrane. The protein localises to the cell projection. Its subcellular location is the axon. It is found in the cytoplasmic vesicle. The protein resides in the secretory vesicle. It localises to the synaptic vesicle. Functionally, probable component of a ligand-gated anion channel. Negatively regulates synaptic transmission and synaptic vesicle release in response to acetylcholine in cholinergic motor neurons. Role in synaptic vesicle release kinetics may be in association with the ligand-gated ion channel protein acc-4. This is Probable ligand-gated ion channel 46 from Caenorhabditis elegans.